Reading from the N-terminus, the 624-residue chain is Exocyst complex component EXO70B1 (624 aa).

A disordered region spans residues Phe148 to Asn176.

The protein belongs to the EXO70 family. As to quaternary structure, interacts with EXO70B2, SEC5A and EXO84B. Binds to PUB18. Binds directly to B1L at the plasma membrane and in small vesicles. Target of the E3 ubiquitin-protein ligase PUB18 that mediates its ubiquitination and degradation via the 26S proteasome.

Its subcellular location is the cytoplasmic vesicle. The protein resides in the phagosome. It is found in the endomembrane system. The protein localises to the cell membrane. It localises to the vesicle. In terms of biological role, component of an exocyst subcomplex specifically involved in autophagy-related, Golgi-independent membrane traffic to the vacuole. Regulates autophagosome formation and autophagy-related Golgi-independent import into the vacuole. Positive regulator of both abscisic acid (ABA)-promoted and mannitol (drought)-promoted stomatal closure. Involved in the regulation of lateral root formation. This Arabidopsis thaliana (Mouse-ear cress) protein is Exocyst complex component EXO70B1.